A 176-amino-acid chain; its full sequence is Large ribosomal subunit protein uL6 (176 aa).

Belongs to the universal ribosomal protein uL6 family. Part of the 50S ribosomal subunit.

Functionally, this protein binds to the 23S rRNA, and is important in its secondary structure. It is located near the subunit interface in the base of the L7/L12 stalk, and near the tRNA binding site of the peptidyltransferase center. In Burkholderia multivorans (strain ATCC 17616 / 249), this protein is Large ribosomal subunit protein uL6.